The following is a 609-amino-acid chain: Proline--tRNA ligase (609 aa).

Belongs to the class-II aminoacyl-tRNA synthetase family. ProS type 1 subfamily. As to quaternary structure, homodimer.

It is found in the cytoplasm. The catalysed reaction is tRNA(Pro) + L-proline + ATP = L-prolyl-tRNA(Pro) + AMP + diphosphate. Functionally, catalyzes the attachment of proline to tRNA(Pro) in a two-step reaction: proline is first activated by ATP to form Pro-AMP and then transferred to the acceptor end of tRNA(Pro). As ProRS can inadvertently accommodate and process non-cognate amino acids such as alanine and cysteine, to avoid such errors it has two additional distinct editing activities against alanine. One activity is designated as 'pretransfer' editing and involves the tRNA(Pro)-independent hydrolysis of activated Ala-AMP. The other activity is designated 'posttransfer' editing and involves deacylation of mischarged Ala-tRNA(Pro). The misacylated Cys-tRNA(Pro) is not edited by ProRS. In Synechococcus sp. (strain JA-2-3B'a(2-13)) (Cyanobacteria bacterium Yellowstone B-Prime), this protein is Proline--tRNA ligase.